The chain runs to 229 residues: Germin-like protein 2-4 (229 aa).

Positions Met1–Gly23 are cleaved as a signal peptide. Cys32 and Cys52 form a disulfide bridge. N-linked (GlcNAc...) asparagine glycosylation is present at Asn57. Positions Ser66–Arg213 constitute a Cupin type-1 domain. The Mn(2+) site is built by His115, His117, Glu122, and His161.

This sequence belongs to the germin family. Oligomer (believed to be a pentamer but probably hexamer).

It is found in the secreted. It localises to the extracellular space. Its subcellular location is the apoplast. May play a role in plant defense. Probably has no oxalate oxidase activity even if the active site is conserved. This Oryza sativa subsp. japonica (Rice) protein is Germin-like protein 2-4.